Here is a 118-residue protein sequence, read N- to C-terminus: V-type proton ATPase subunit G 3 (118 aa).

Over residues 1-12 the composition is skewed to polar residues; that stretch reads MASQSQGIQQLL. Residues 1-37 are disordered; that stretch reads MASQSQGIQQLLQAEKRAKDKLEEAKKRKNKRLRQAK. Residues 3–53 adopt a coiled-coil conformation; it reads SQSQGIQQLLQAEKRAKDKLEEAKKRKNKRLRQAKEEATADIDQYRLKREG. Over residues 14 to 26 the composition is skewed to basic and acidic residues; the sequence is AEKRAKDKLEEAK.

It belongs to the V-ATPase G subunit family. As to quaternary structure, V-ATPase is a heteromultimeric enzyme made up of two complexes: the ATP-hydrolytic V1 complex and the proton translocation V0 complex. The V1 complex consists of three catalytic AB heterodimers that form a heterohexamer, three peripheral stalks each consisting of EG heterodimers, one central rotor including subunits D and F, and the regulatory subunits C and H. The proton translocation complex V0 consists of the proton transport subunit a, a ring of proteolipid subunits c9c'', rotary subunit d, subunits e and f, and two accessory subunits.

Functionally, subunit of the V1 complex of vacuolar(H+)-ATPase (V-ATPase), a multisubunit enzyme composed of a peripheral complex (V1) that hydrolyzes ATP and a membrane integral complex (V0) that translocates protons. V-ATPase is responsible for acidifying and maintaining the pH of intracellular compartments and in some cell types, is targeted to the plasma membrane, where it is responsible for acidifying the extracellular environment. This Xenopus tropicalis (Western clawed frog) protein is V-type proton ATPase subunit G 3 (atp6v1g3).